The sequence spans 148 residues: Snaclec 6 (148 aa).

Residues 1-23 (MGRFIFVSFGLLVMFLSLSGTEA) form the signal peptide. 3 cysteine pairs are disulfide-bonded: C27–C38, C55–C144, and C121–C136. The C-type lectin domain maps to 34–145 (YDQNCYKAFE…CSGTHNFVCK (112 aa)). Residue N130 is glycosylated (N-linked (GlcNAc...) asparagine).

The protein belongs to the snaclec family. As to quaternary structure, heterodimer; disulfide-linked. In terms of tissue distribution, expressed by the venom gland.

The protein localises to the secreted. In terms of biological role, interferes with one step of hemostasis (modulation of platelet aggregation, or coagulation cascade, for example). This is Snaclec 6 from Bitis arietans (African puff adder).